The sequence spans 235 residues: Glycerol-3-phosphate acyltransferase (235 aa).

Transmembrane regions (helical) follow at residues 4 to 24, 56 to 76, 94 to 114, 122 to 142, 152 to 172, and 191 to 211; these read LIAILAISYLVGAIPTGIMAG, AVTLLDILKGIVAAVSIVAFF, LLAGMSAVIGHVFTVFAGFKG, AGMLIGIAPVSMLIVIGIFLL, VASILAAIAFPLIIAIRKYIF, and FHDSLDYHLMIFGLIVALAIL.

Belongs to the PlsY family. Probably interacts with PlsX.

The protein resides in the cell inner membrane. It carries out the reaction an acyl phosphate + sn-glycerol 3-phosphate = a 1-acyl-sn-glycero-3-phosphate + phosphate. It functions in the pathway lipid metabolism; phospholipid metabolism. Functionally, catalyzes the transfer of an acyl group from acyl-phosphate (acyl-PO(4)) to glycerol-3-phosphate (G3P) to form lysophosphatidic acid (LPA). This enzyme utilizes acyl-phosphate as fatty acyl donor, but not acyl-CoA or acyl-ACP. The chain is Glycerol-3-phosphate acyltransferase from Chlorobium phaeobacteroides (strain DSM 266 / SMG 266 / 2430).